The sequence spans 160 residues: 2-C-methyl-D-erythritol 2,4-cyclodiphosphate synthase (160 aa).

A divalent metal cation contacts are provided by Asp-10 and His-12. 4-CDP-2-C-methyl-D-erythritol 2-phosphate contacts are provided by residues 10-12 and 36-37; these read DVH and HS. His-44 provides a ligand contact to a divalent metal cation. 4-CDP-2-C-methyl-D-erythritol 2-phosphate is bound by residues 58–60, 63–67, and Arg-144; these read DIG and FPDTD.

Belongs to the IspF family. Homotrimer. Requires a divalent metal cation as cofactor.

The catalysed reaction is 4-CDP-2-C-methyl-D-erythritol 2-phosphate = 2-C-methyl-D-erythritol 2,4-cyclic diphosphate + CMP. It participates in isoprenoid biosynthesis; isopentenyl diphosphate biosynthesis via DXP pathway; isopentenyl diphosphate from 1-deoxy-D-xylulose 5-phosphate: step 4/6. Functionally, involved in the biosynthesis of isopentenyl diphosphate (IPP) and dimethylallyl diphosphate (DMAPP), two major building blocks of isoprenoid compounds. Catalyzes the conversion of 4-diphosphocytidyl-2-C-methyl-D-erythritol 2-phosphate (CDP-ME2P) to 2-C-methyl-D-erythritol 2,4-cyclodiphosphate (ME-CPP) with a corresponding release of cytidine 5-monophosphate (CMP). This Dechloromonas aromatica (strain RCB) protein is 2-C-methyl-D-erythritol 2,4-cyclodiphosphate synthase.